A 161-amino-acid chain; its full sequence is Putative ecotin-like protein (161 aa).

Residues 1 to 24 (MSLRPIETAIASLTMLMLQGCAHA) form the signal peptide.

Belongs to the protease inhibitor I11 (ecotin) family.

The sequence is that of Putative ecotin-like protein from Methylobacillus flagellatus (strain ATCC 51484 / DSM 6875 / VKM B-1610 / KT).